The sequence spans 77 residues: U8-lycotoxin-Ls1a (77 aa).

Positions 1–20 (MKLIIFTGLVLFAIVSLIEA) are cleaved as a signal peptide. Positions 21–26 (QAENEK) are excised as a propeptide.

This sequence belongs to the neurotoxin 19 (CSTX) family. 08 (U8-Lctx) subfamily. In terms of processing, contains 4 disulfide bonds. In terms of tissue distribution, expressed by the venom gland.

It localises to the secreted. This Lycosa singoriensis (Wolf spider) protein is U8-lycotoxin-Ls1a.